The following is a 702-amino-acid chain: Elongation factor G (702 aa).

The region spanning 8-196 (ERYRNIGISA…MKAIIWDEAS (189 aa)) is the tr-type G domain. GTP is bound by residues 17–24 (AHIDAGKT), 88–92 (DTPGH), and 142–145 (NKMD).

This sequence belongs to the TRAFAC class translation factor GTPase superfamily. Classic translation factor GTPase family. EF-G/EF-2 subfamily.

The protein localises to the cytoplasm. Functionally, catalyzes the GTP-dependent ribosomal translocation step during translation elongation. During this step, the ribosome changes from the pre-translocational (PRE) to the post-translocational (POST) state as the newly formed A-site-bound peptidyl-tRNA and P-site-bound deacylated tRNA move to the P and E sites, respectively. Catalyzes the coordinated movement of the two tRNA molecules, the mRNA and conformational changes in the ribosome. The sequence is that of Elongation factor G (fusA) from Thiomonas delicata (Thiomonas cuprina).